The sequence spans 182 residues: Isopentenyl-diphosphate Delta-isomerase (182 aa).

The Mn(2+) site is built by His25 and His32. The Nudix hydrolase domain maps to 30–164; the sequence is LLHLAFSSWL…PWAFSPWMVM (135 aa). The active site involves Cys67. Residue His69 participates in Mn(2+) binding. Glu87 is a binding site for Mg(2+). 2 residues coordinate Mn(2+): Glu114 and Glu116. Residue Glu116 is part of the active site.

The protein belongs to the IPP isomerase type 1 family. As to quaternary structure, homodimer. Mg(2+) is required as a cofactor. It depends on Mn(2+) as a cofactor.

Its subcellular location is the cytoplasm. It catalyses the reaction isopentenyl diphosphate = dimethylallyl diphosphate. The protein operates within isoprenoid biosynthesis; dimethylallyl diphosphate biosynthesis; dimethylallyl diphosphate from isopentenyl diphosphate: step 1/1. Its function is as follows. Catalyzes the 1,3-allylic rearrangement of the homoallylic substrate isopentenyl (IPP) to its highly electrophilic allylic isomer, dimethylallyl diphosphate (DMAPP). The chain is Isopentenyl-diphosphate Delta-isomerase from Shigella boydii serotype 18 (strain CDC 3083-94 / BS512).